The chain runs to 377 residues: ATP synthase gamma chain, chloroplastic (377 aa).

The N-terminal 55 residues, 1–55 (MSCSNLTMLVSSKPSLSDSSALSFRSSVSPFQLPNHNTSGPSNPSRSSSVTPVHC), are a transit peptide targeting the chloroplast. The interval 30–52 (PFQLPNHNTSGPSNPSRSSSVTP) is disordered. A compositionally biased stretch (low complexity) spans 37 to 52 (NTSGPSNPSRSSSVTP). Residue C143 is part of the active site. Residues C253 and C259 are joined by a disulfide bond.

The protein belongs to the ATPase gamma chain family. F-type ATPases have 2 components, CF(1) - the catalytic core - and CF(0) - the membrane proton channel. CF(1) has five subunits: alpha(3), beta(3), gamma(1), delta(1), epsilon(1). CF(0) has four main subunits: a, b, b' and c.

It is found in the plastid. The protein localises to the chloroplast thylakoid membrane. Functionally, produces ATP from ADP in the presence of a proton gradient across the membrane. The gamma chain is believed to be important in regulating ATPase activity and the flow of protons through the CF(0) complex. This is ATP synthase gamma chain, chloroplastic (ATPC) from Nicotiana tabacum (Common tobacco).